Consider the following 412-residue polypeptide: Multifunctional CCA protein (412 aa).

ATP is bound by residues G8 and R11. G8 and R11 together coordinate CTP. Residues D21 and D23 each coordinate Mg(2+). Positions 91, 137, and 140 each coordinate ATP. CTP-binding residues include R91, R137, and R140. Residues 228-329 (TGIHTLMTLS…VKLFDSIDAW (102 aa)) enclose the HD domain.

The protein belongs to the tRNA nucleotidyltransferase/poly(A) polymerase family. Bacterial CCA-adding enzyme type 1 subfamily. As to quaternary structure, monomer. Can also form homodimers and oligomers. Requires Mg(2+) as cofactor. Ni(2+) serves as cofactor.

It carries out the reaction a tRNA precursor + 2 CTP + ATP = a tRNA with a 3' CCA end + 3 diphosphate. The catalysed reaction is a tRNA with a 3' CCA end + 2 CTP + ATP = a tRNA with a 3' CCACCA end + 3 diphosphate. Its function is as follows. Catalyzes the addition and repair of the essential 3'-terminal CCA sequence in tRNAs without using a nucleic acid template. Adds these three nucleotides in the order of C, C, and A to the tRNA nucleotide-73, using CTP and ATP as substrates and producing inorganic pyrophosphate. tRNA 3'-terminal CCA addition is required both for tRNA processing and repair. Also involved in tRNA surveillance by mediating tandem CCA addition to generate a CCACCA at the 3' terminus of unstable tRNAs. While stable tRNAs receive only 3'-terminal CCA, unstable tRNAs are marked with CCACCA and rapidly degraded. In Escherichia coli O6:H1 (strain CFT073 / ATCC 700928 / UPEC), this protein is Multifunctional CCA protein.